The chain runs to 489 residues: Pre-glycoprotein polyprotein GP complex (489 aa).

Residue G2 is the site of N-myristoyl glycine; by host attachment. Residues 2–17 (GQIVTFFQEVPHILEE) are Extracellular-facing. A helical membrane pass occupies residues 18-33 (VMNIVLMTLSILAILK). Topologically, residues 34–58 (GIYNVMTCGIIGLITFLFLCGRSCS) are cytoplasmic. Residue C57 coordinates Zn(2+). The Extracellular portion of the chain corresponds to 59–430 (SIYKDNYEFF…QSTTPLGLVD (372 aa)). Residues N78, N88, N98, N108, N118, and N166 are each glycosylated (N-linked (GlcNAc...) asparagine; by host). Cystine bridges form between C85–C229, C117–C154, C179–C210, C277–C290, C299–C308, and C362–C383. N222 carries N-linked (GlcNAc...) asparagine; by host glycosylation. N363, N371, N388, and N393 each carry an N-linked (GlcNAc...) asparagine; by host glycan. The helical transmembrane segment at 431–451 (LFVFSTSFYLISVFLHLIKIP) threads the bilayer. Over 452-489 (THRHIKGKPCPKPHRLNHMAICSCGFYKQPGLPTQWKR) the chain is Cytoplasmic. Zn(2+) contacts are provided by H453, H455, C461, H465, C473, and C475.

The protein belongs to the arenaviridae GPC protein family. As to quaternary structure, interacts with glycoprotein G2. Part of the GP complex (GP-C) together with glycoprotein G1 and glycoprotein G2. The GP-complex interacts with protein Z, which interacts with ribonucleocapsid; these interactions may induce virion budding. In terms of assembly, homotrimer; disulfide-linked. In pre-fusion state, G1 homotrimers bind G2 homotrimers via ionic interactions. Part of the GP complex (GP-C) together with glycoprotein G2 and the stable signal peptide. The GP-complex interacts with protein Z, which interacts with ribonucleocapsid; these interactions may induce virion budding. Homotrimer. Interacts with the stable signal peptide. In pre-fusion state, G2 homotrimers bind G1 homotrimers via ionic interactions. Part of the GP complex (GP-C) together with glycoprotein G1 and the stable signal peptide. Acidification in the endosome triggers rearrangements, which ultimately leads to a 6 helix bundle formed by the two heptad repeat domains (HR1 and HR2) in post-fusion state. The GP-complex interacts with protein Z, which interacts with ribonucleocapsid; these interactions may induce virion budding. Post-translationally, specific enzymatic cleavages in vivo yield mature proteins. GP-C polyprotein is cleaved in the endoplasmic reticulum by the host protease MBTPS1. Only cleaved glycoprotein is incorporated into virions. In terms of processing, the SSP remains stably associated with the GP complex following cleavage by signal peptidase and plays crucial roles in the trafficking of GP through the secretory pathway. Myristoylation is necessary for GP2-mediated fusion activity.

It is found in the virion membrane. It localises to the host endoplasmic reticulum membrane. Its subcellular location is the host Golgi apparatus membrane. The protein resides in the host cell membrane. Functionally, functions as a cleaved signal peptide that is retained as the third component of the GP complex (GP-C). Helps to stabilize the spike complex in its native conformation. The SSP is required for efficient glycoprotein expression, post-translational maturation cleavage of G1 and G2, glycoprotein transport to the cell surface plasma membrane, formation of infectious virus particles, and acid pH-dependent glycoprotein-mediated cell fusion. In terms of biological role, forms the virion spikes together with glycoprotein G2. The glycoprotein spike trimers are connected to the underlying matrix. Interacts with the host receptor leading to virus endocytosis. Forms the virion spikes together with glycoprotein G1. The glycoprotein spike trimers are connected to the underlying matrix. Class I viral fusion protein that directs fusion of viral and host endosomal membranes, leading to delivery of the nucleocapsid into the cytoplasm. Membrane fusion is mediated by irreversible conformational changes induced by acidification. The protein is Pre-glycoprotein polyprotein GP complex of Mastomys natalensis (African soft-furred rat).